Here is a 469-residue protein sequence, read N- to C-terminus: Aspartyl/glutamyl-tRNA(Asn/Gln) amidotransferase subunit B (469 aa).

The protein belongs to the GatB/GatE family. GatB subfamily. In terms of assembly, heterotrimer of A, B and C subunits.

The catalysed reaction is L-glutamyl-tRNA(Gln) + L-glutamine + ATP + H2O = L-glutaminyl-tRNA(Gln) + L-glutamate + ADP + phosphate + H(+). It catalyses the reaction L-aspartyl-tRNA(Asn) + L-glutamine + ATP + H2O = L-asparaginyl-tRNA(Asn) + L-glutamate + ADP + phosphate + 2 H(+). Allows the formation of correctly charged Asn-tRNA(Asn) or Gln-tRNA(Gln) through the transamidation of misacylated Asp-tRNA(Asn) or Glu-tRNA(Gln) in organisms which lack either or both of asparaginyl-tRNA or glutaminyl-tRNA synthetases. The reaction takes place in the presence of glutamine and ATP through an activated phospho-Asp-tRNA(Asn) or phospho-Glu-tRNA(Gln). The protein is Aspartyl/glutamyl-tRNA(Asn/Gln) amidotransferase subunit B of Methanococcus maripaludis (strain C7 / ATCC BAA-1331).